Reading from the N-terminus, the 452-residue chain is Proline--tRNA ligase (452 aa).

It belongs to the class-II aminoacyl-tRNA synthetase family. ProS type 2 subfamily. Homodimer.

It is found in the cytoplasm. The enzyme catalyses tRNA(Pro) + L-proline + ATP = L-prolyl-tRNA(Pro) + AMP + diphosphate. Its function is as follows. Catalyzes the attachment of proline to tRNA(Pro) in a two-step reaction: proline is first activated by ATP to form Pro-AMP and then transferred to the acceptor end of tRNA(Pro). In Jannaschia sp. (strain CCS1), this protein is Proline--tRNA ligase.